Here is a 166-residue protein sequence, read N- to C-terminus: Lipoprotein signal peptidase (166 aa).

The next 4 helical transmembrane spans lie at 10–30 (GGALAPWLGISLIVILFDQLT), 32–52 (IAVLKTFAYGAMHALTPFFNL), 71–91 (WQRWAFTALGIGATLVICYLL), and 100–120 (FSLSLALILGGALGNVIDRLI). Residues Asp-126 and Asp-144 contribute to the active site. The chain crosses the membrane as a helical span at residues 135 to 155 (WHWPAFNLADSAITVGAVLLI).

The protein belongs to the peptidase A8 family.

Its subcellular location is the cell inner membrane. The enzyme catalyses Release of signal peptides from bacterial membrane prolipoproteins. Hydrolyzes -Xaa-Yaa-Zaa-|-(S,diacylglyceryl)Cys-, in which Xaa is hydrophobic (preferably Leu), and Yaa (Ala or Ser) and Zaa (Gly or Ala) have small, neutral side chains.. It functions in the pathway protein modification; lipoprotein biosynthesis (signal peptide cleavage). This protein specifically catalyzes the removal of signal peptides from prolipoproteins. This Burkholderia mallei (strain ATCC 23344) protein is Lipoprotein signal peptidase.